Here is a 534-residue protein sequence, read N- to C-terminus: Cytochrome P450 714B1 (534 aa).

A topological domain (lumenal) is located at residue methionine 1. A helical; Signal-anchor for type III membrane protein membrane pass occupies residues 2–22; it reads VVVVAAAMAAASLCCGVAAYL. At 23 to 534 the chain is on the cytoplasmic side; that stretch reads YYVLWLAPER…RSKCDWAGFD (512 aa). Cysteine 472 contacts heme.

Belongs to the cytochrome P450 family. It depends on heme as a cofactor. In terms of tissue distribution, highly expressed in spikelet and uppermost internode. Detected in shoots, roots, leaves and anthers.

The protein resides in the membrane. In terms of biological role, catalyzes the 13-hydroxylation of gibberellins (GAs). Determines the ratio of GA4 and GA1. Converts GA12 into GA53. The sequence is that of Cytochrome P450 714B1 (CYP714B1) from Oryza sativa subsp. japonica (Rice).